We begin with the raw amino-acid sequence, 251 residues long: uncharacterized protein (251 aa).

An AMMECR1 domain is found at 21–246; sequence KGSSPFAFYA…ITYEEFNKQL (226 aa).

This is an uncharacterized protein from Saccharomyces cerevisiae (strain ATCC 204508 / S288c) (Baker's yeast).